A 421-amino-acid polypeptide reads, in one-letter code: D-amino acid dehydrogenase (421 aa).

3–17 (VIVLGSGVIGVASAY) contributes to the FAD binding site.

It belongs to the DadA oxidoreductase family. It depends on FAD as a cofactor.

It catalyses the reaction a D-alpha-amino acid + A + H2O = a 2-oxocarboxylate + AH2 + NH4(+). It participates in amino-acid degradation; D-alanine degradation; NH(3) and pyruvate from D-alanine: step 1/1. Functionally, oxidative deamination of D-amino acids. The protein is D-amino acid dehydrogenase of Acinetobacter baumannii (strain ATCC 17978 / DSM 105126 / CIP 53.77 / LMG 1025 / NCDC KC755 / 5377).